The sequence spans 662 residues: Glutathione hydrolase 7 (662 aa).

Residues 1–106 are Cytoplasmic-facing; sequence MAAENEASQE…AAECSCRQDG (106 aa). 4 positions are modified to phosphoserine: serine 17, serine 72, serine 79, and serine 83. The segment at 26 to 90 is disordered; that stretch reads SFPRLPEDEP…DGSPLRETRK (65 aa). A compositionally biased stretch (low complexity) spans 72–83; it reads SSSSEMGSQDGS. The helical; Signal-anchor for type II membrane protein transmembrane segment at 107 to 127 threads the bilayer; the sequence is LTVIVTACLTFATGVTVALVM. The Extracellular portion of the chain corresponds to 128-662; the sequence is QIYFGDPQIF…SPDAAGATIL (535 aa). Asparagine 198, asparagine 267, asparagine 283, asparagine 330, asparagine 353, asparagine 394, asparagine 452, asparagine 519, asparagine 523, and asparagine 586 each carry an N-linked (GlcNAc...) asparagine glycan.

The protein belongs to the gamma-glutamyltransferase family. In terms of assembly, interacts with TLCD3A. As to quaternary structure, heterodimer composed of the light and heavy chains. The active site is located in the light chain. Cleaved by autocatalysis into a large and a small subunit and the autocatalytic cleavage is essential to the functional activation of the enzyme. Widely expressed, but at low level, except in the airway epithelial cells. Detected in brain, heart, kidney, liver, lung, spleen, testis and trachea.

Its subcellular location is the membrane. The catalysed reaction is an N-terminal (5-L-glutamyl)-[peptide] + an alpha-amino acid = 5-L-glutamyl amino acid + an N-terminal L-alpha-aminoacyl-[peptide]. It catalyses the reaction glutathione + H2O = L-cysteinylglycine + L-glutamate. It carries out the reaction an S-substituted glutathione + H2O = an S-substituted L-cysteinylglycine + L-glutamate. It participates in sulfur metabolism; glutathione metabolism. Hydrolyzes and transfers gamma-glutamyl moieties from glutathione and other gamma-glutamyl compounds to acceptors. This chain is Glutathione hydrolase 7, found in Homo sapiens (Human).